Reading from the N-terminus, the 65-residue chain is Hirudin-3B' (65 aa).

The interval 1-3 is interaction with thrombin active site; the sequence is VVY. 3 disulfide bridges follow: Cys6-Cys14, Cys16-Cys28, and Cys22-Cys39. Residues 40–65 are disordered; the sequence is VTGEGTPKPQSHNDGDFEEIPEEYLQ. O-linked (GalNAc...) threonine glycosylation is present at Thr45. Residues 55–65 form an interaction with fibrinogen-binding exosite of thrombin region; that stretch reads DFEEIPEEYLQ. A compositionally biased stretch (acidic residues) spans 55–65; it reads DFEEIPEEYLQ. Tyr63 carries the post-translational modification Sulfotyrosine.

Belongs to the protease inhibitor I14 (hirudin) family.

It localises to the secreted. In terms of biological role, hirudin is a potent thrombin-specific protease inhibitor. It forms a stable non-covalent complex with alpha-thrombin, thereby abolishing its ability to cleave fibrinogen. This chain is Hirudin-3B', found in Hirudo medicinalis (Medicinal leech).